The sequence spans 290 residues: Nucleoid occlusion protein (290 aa).

The H-T-H motif DNA-binding region spans 153–172; sequence EALAQRLGKGQSTIANKLRL.

Belongs to the ParB family.

It is found in the cytoplasm. The protein resides in the nucleoid. Functionally, effects nucleoid occlusion by binding relatively nonspecifically to DNA and preventing the assembly of the division machinery in the vicinity of the nucleoid, especially under conditions that disturb the cell cycle. It helps to coordinate cell division and chromosome segregation by preventing the formation of the Z ring through the nucleoid, which would cause chromosome breakage. The sequence is that of Nucleoid occlusion protein from Bacillus cytotoxicus (strain DSM 22905 / CIP 110041 / 391-98 / NVH 391-98).